Consider the following 881-residue polypeptide: Mechanosensitive ion channel protein 4 (881 aa).

The tract at residues 35 to 245 is disordered; the sequence is FWHNDKSSKP…EEEDPFSEED (211 aa). Over residues 56–66 the composition is skewed to basic and acidic residues; sequence FMRRSSEKSEE. Composition is skewed to polar residues over residues 73–82, 100–118, and 206–230; these read LINQFLNKQK, QKNT…SASP, and TPRS…NQGG. The span at 234 to 245 shows a compositional bias: acidic residues; the sequence is LEEEEDPFSEED. The next 4 membrane-spanning stretches (helical) occupy residues 255–275, 297–317, 339–359, and 377–397; these read ICVW…SLIC, VMVL…KLFV, KPVQ…FLFD, and VLIC…LVKV. Positions 457–501 are disordered; sequence GPKAVSSPPQVTVGSGRLQKSPSRVGKSPVLSRSGSKKEGGEEGI. The segment covering 463–478 has biased composition (polar residues); that stretch reads SPPQVTVGSGRLQKSP. Residues 492–501 show a composition bias toward basic and acidic residues; sequence SKKEGGEEGI. Helical transmembrane passes span 643–663 and 678–698; these read IVDV…LGIA and VVFV…FVFV.

Belongs to the MscS (TC 1.A.23) family.

The protein resides in the membrane. Functionally, mechanosensitive channel that opens in response to stretch forces in the membrane lipid bilayer. The sequence is that of Mechanosensitive ion channel protein 4 (MSL4) from Arabidopsis thaliana (Mouse-ear cress).